We begin with the raw amino-acid sequence, 639 residues long: Chaperone protein HtpG (639 aa).

The segment at 1–348 (MAQYEFQTEV…SEDLPLNVSR (348 aa)) is a; substrate-binding. The b stretch occupies residues 349–565 (EILQQNRVLA…ENDPTVQMER (217 aa)). Residues 566–639 (LMRATGQTHK…KRVNRLLARG (74 aa)) form a c region.

It belongs to the heat shock protein 90 family. Homodimer.

The protein localises to the cytoplasm. In terms of biological role, molecular chaperone. Has ATPase activity. The chain is Chaperone protein HtpG from Treponema pallidum (strain Nichols).